The primary structure comprises 124 residues: MSTTNDNTTMQRLMITDMRPLSMESIITSLTKEIITHKFIYLINNECIVRKLDERQATFTFLVNYEMKLLHKVGSTIYKKYTEYNTKYGTFPMPIFINHDGFLECIGIKPTKHTPIIYKYDLNP.

Positions 121–124 (DLNP) match the DLNP; interaction with MAP1B motif.

This sequence belongs to the pneumovirus non-structural protein 2 family. Monomer (instable). Homomultimer. Heteromultimer with NS1. Interacts with host RIGI (via N-terminus); this interaction prevents host signaling pathway involved in interferon production. Interacts with host MAP1B/microtubule-associated protein 1B.

Its subcellular location is the host mitochondrion. Plays a major role in antagonizing the type I IFN-mediated antiviral response. Acts cooperatively with NS1 to repress activation and nuclear translocation of host IFN-regulatory factor IRF3. Interacts with the host cytoplasmic sensor of viral nucleic acids RIGI and prevents the interaction with its downstream partner MAVS. Together with NS2, participates in the proteasomal degradation of host STAT2, IRF3, IRF7, TBK1 and RIGI through a NS-degradasome involving CUL2 and Elongin-C. The degradasome requires an intact mitochondrial MAVS. Induces host SOCS1 expression. Induces activation of NF-kappa-B. Suppresses premature apoptosis by an NF-kappa-B-dependent, interferon-independent mechanism promoting continued viral replication. The polypeptide is Non-structural protein 2 (1B) (Human respiratory syncytial virus B (strain 18537)).